The sequence spans 421 residues: Mitochondrial tRNA-specific 2-thiouridylase 1 (421 aa).

ATP is bound by residues 10–17 (ALSGGVDS) and methionine 36. The tract at residues 96–98 (NPD) is interaction with target base in tRNA. The Nucleophile role is filled by cysteine 101. An intrachain disulfide couples cysteine 101 to cysteine 222. Glycine 126 contacts ATP. Residues 171–173 (KDQ) are interaction with tRNA. Residue cysteine 222 is the Cysteine persulfide intermediate of the active site. The interaction with tRNA stretch occupies residues 334-335 (RH). The disordered stretch occupies residues 395-421 (KGQRRAGMATESPSDSPEDGPGLSPLL).

The protein belongs to the MnmA/TRMU family. In terms of tissue distribution, ubiquitous. Abundantly expressed in tissues with high metabolic rates including heart, liver, kidney, and brain.

Its subcellular location is the mitochondrion. It carries out the reaction 5-taurinomethyluridine(34) in tRNA + S-sulfanyl-L-cysteinyl-[protein] + AH2 + ATP = 5-taurinomethyl-2-thiouridine(34) in tRNA + L-cysteinyl-[protein] + A + AMP + diphosphate + H(+). Its function is as follows. Catalyzes the 2-thiolation of uridine at the wobble position (U34) of mitochondrial tRNA(Lys), tRNA(Glu) and tRNA(Gln). Required for the formation of 5-taurinomethyl-2-thiouridine (tm5s2U) of mitochondrial tRNA(Lys), tRNA(Glu), and tRNA(Gln) at the wobble position. ATP is required to activate the C2 atom of the wobble base. In Homo sapiens (Human), this protein is Mitochondrial tRNA-specific 2-thiouridylase 1 (TRMU).